We begin with the raw amino-acid sequence, 273 residues long: Putative pyruvate, phosphate dikinase regulatory protein (273 aa).

153–160 (GVSRTSKT) contacts ADP.

This sequence belongs to the pyruvate, phosphate/water dikinase regulatory protein family. PDRP subfamily.

It carries out the reaction N(tele)-phospho-L-histidyl/L-threonyl-[pyruvate, phosphate dikinase] + ADP = N(tele)-phospho-L-histidyl/O-phospho-L-threonyl-[pyruvate, phosphate dikinase] + AMP + H(+). The catalysed reaction is N(tele)-phospho-L-histidyl/O-phospho-L-threonyl-[pyruvate, phosphate dikinase] + phosphate + H(+) = N(tele)-phospho-L-histidyl/L-threonyl-[pyruvate, phosphate dikinase] + diphosphate. In terms of biological role, bifunctional serine/threonine kinase and phosphorylase involved in the regulation of the pyruvate, phosphate dikinase (PPDK) by catalyzing its phosphorylation/dephosphorylation. The chain is Putative pyruvate, phosphate dikinase regulatory protein from Sinorhizobium medicae (strain WSM419) (Ensifer medicae).